Consider the following 204-residue polypeptide: Dof zinc finger protein DOF3.1 (204 aa).

Positions 1–25 (MQDPAAYYQTMMAKQQQQQQPQFAE) are disordered. The Dof-type zinc-finger motif lies at 29–83 (LKCPRCDSPNTKFCYYNNYNLSQPRHFCKSCRRYWTKGGALRNVPVGGGSRKNAT). Residues Cys31, Cys34, Cys56, and Cys59 each coordinate Zn(2+). 2 disordered regions span residues 70-128 (RNVP…TRML) and 182-204 (RTEPGNNNNNPWTDLAMNRAEKN). Residues 84-102 (KRSTSSSSSASSPSNSSQN) are compositionally biased toward low complexity. The segment covering 106–124 (KNPDPDPDPRNSQKPDLDP) has biased composition (basic and acidic residues).

The protein resides in the nucleus. Its function is as follows. Transcription factor that binds specifically to a 5'-AA[AG]G-3' consensus core sequence. The polypeptide is Dof zinc finger protein DOF3.1 (DOF3.1) (Arabidopsis thaliana (Mouse-ear cress)).